Reading from the N-terminus, the 438-residue chain is V-type ATP synthase beta chain (438 aa).

Belongs to the ATPase alpha/beta chains family.

Produces ATP from ADP in the presence of a proton gradient across the membrane. The V-type beta chain is a regulatory subunit. In Chlamydia trachomatis serovar A (strain ATCC VR-571B / DSM 19440 / HAR-13), this protein is V-type ATP synthase beta chain.